The chain runs to 179 residues: UPF0302 protein YpiB (179 aa).

The protein belongs to the UPF0302 family.

This Bacillus subtilis (strain 168) protein is UPF0302 protein YpiB (ypiB).